A 228-amino-acid polypeptide reads, in one-letter code: Lipoprotein-releasing system ATP-binding protein LolD (228 aa).

Residues 6–228 (IKCINLNKSY…ENNQIFNYES (223 aa)) form the ABC transporter domain. 42–49 (GKSGSGKT) is an ATP binding site.

It belongs to the ABC transporter superfamily. Lipoprotein translocase (TC 3.A.1.125) family.

The protein localises to the cell inner membrane. Functionally, usually LolD forms an ABC transporter complex with LolC and LolE involved in the translocation of lipoprotein, in an ATP-dependent manner. However, LolE is certainly not functional as it is frameshifted. In Buchnera aphidicola subsp. Acyrthosiphon pisum (strain APS) (Acyrthosiphon pisum symbiotic bacterium), this protein is Lipoprotein-releasing system ATP-binding protein LolD.